The chain runs to 414 residues: Serine hydroxymethyltransferase (414 aa).

(6S)-5,6,7,8-tetrahydrofolate is bound by residues leucine 121 and 125 to 127; that span reads GHL. Residue lysine 229 is modified to N6-(pyridoxal phosphate)lysine.

It belongs to the SHMT family. Homodimer. Pyridoxal 5'-phosphate serves as cofactor.

Its subcellular location is the cytoplasm. The enzyme catalyses (6R)-5,10-methylene-5,6,7,8-tetrahydrofolate + glycine + H2O = (6S)-5,6,7,8-tetrahydrofolate + L-serine. Its pathway is one-carbon metabolism; tetrahydrofolate interconversion. The protein operates within amino-acid biosynthesis; glycine biosynthesis; glycine from L-serine: step 1/1. In terms of biological role, catalyzes the reversible interconversion of serine and glycine with tetrahydrofolate (THF) serving as the one-carbon carrier. This reaction serves as the major source of one-carbon groups required for the biosynthesis of purines, thymidylate, methionine, and other important biomolecules. Also exhibits THF-independent aldolase activity toward beta-hydroxyamino acids, producing glycine and aldehydes, via a retro-aldol mechanism. The sequence is that of Serine hydroxymethyltransferase from Polaromonas sp. (strain JS666 / ATCC BAA-500).